The primary structure comprises 271 residues: Oligodendrocyte transcription factor 1 (271 aa).

The disordered stretch occupies residues 38–117; it reads YRQPPSSSSS…RKINSRERKR (80 aa). Over residues 43–61 the composition is skewed to low complexity; that stretch reads SSSSSSTSSTSSTSSSSTT. The region spanning 105–164 is the bHLH domain; sequence QLRRKINSRERKRMQDLNLAMDALREVILPYSAAHCQGAPGRKLSKIATLLLARNYILLL.

In terms of tissue distribution, expressed in the brain, in oligodendrocytes. Strongly expressed in oligodendrogliomas, while expression is weak to moderate in astrocytomas. Expression in glioblastomas is highly variable.

It localises to the nucleus. In terms of biological role, promotes formation and maturation of oligodendrocytes, especially within the brain. Cooperates with OLIG2 to establish the pMN domain of the embryonic neural tube. The polypeptide is Oligodendrocyte transcription factor 1 (OLIG1) (Homo sapiens (Human)).